Consider the following 505-residue polypeptide: MSQSNRVRDEVTLPLLQKTSHLKNHSSVLSVFLNEAISICKISYPLVLTGLFLYVRSFVSLSFLGGLGDATLAGGSLAAAFANITGYSLFSGLTMGVESICSQAFGARRYNYVCASVKRGIILLLVTSLPVTLLWMNMEKILLILKQDKKLASEAHIFLLYSVPDLVAQSFLHPLRVYLRTQSKTLPLSICTVIASFLHLPITFFLVSYLGLGIKGIALSGVVSNFNLVAFLFLYICFFEDKLSVNEDEKITEETCEDSVREWKKLLCLAIPSCISVCLEWWCYEIMILLCGFLLDPKASVASMGILIQITSLVYIFPHSLSLGVSTRVGNELGSNQPKRARRAAIVGLGLSIALGFTAFAFTVSVRNTWAMFFTDDKEIMKLTAMALPIVGLCELGNCPQTTGCGVLRGSARPKIGANINGVAFYAVGIPVGAVLAFWFGFGFKGLWLGMLAAQITCVIGMMAATCRTDWELEAERAKVLTTAVDCGSSDDDAKEDMEAGMVDK.

The next 12 helical transmembrane spans lie at 46–66, 78–98, 121–141, 155–175, 194–214, 219–239, 275–295, 305–325, 344–364, 380–400, 424–444, and 446–466; these read LVLT…FLGG, AAAF…MGVE, IILL…MEKI, AHIF…LHPL, IASF…GLGI, LSGV…ICFF, ISVC…GFLL, GILI…SLGV, AAIV…AFTV, IMKL…GNCP, AFYA…GFGF, and GLWL…MAAT.

It belongs to the multi antimicrobial extrusion (MATE) (TC 2.A.66.1) family. As to expression, preferentially expressed in rosette leaves. Detected mainly in the vascular tissues and guard cells. Mostly detected at reproductive stages in young anthers, in mature pollens and during pollen germination on the pistil. Also expressed in developing seeds.

The protein localises to the cell membrane. It is found in the late endosome membrane. In terms of biological role, functions as a multidrug and toxin extrusion transporter in the export of abscisic acid (ABA) in guard cells. Plays a role in ABA-mediated growth inhibition and responses to drought conditions. May act as a negative regulator of hypocotyl cell elongation in the light. The polypeptide is Protein DETOXIFICATION 50 (Arabidopsis thaliana (Mouse-ear cress)).